A 79-amino-acid polypeptide reads, in one-letter code: CDC42 small effector protein 1-A (79 aa).

Residues cysteine 10 and cysteine 11 are each lipidated (S-palmitoyl cysteine). One can recognise a CRIB domain in the interval 30–43 (IGEPMNFVHLTHVG).

Belongs to the CDC42SE/SPEC family.

Its subcellular location is the cytoplasm. It localises to the cytoskeleton. The protein resides in the cell membrane. Probably involved in the organization of the actin cytoskeleton by acting downstream of CDC42, inducing actin filament assembly. The protein is CDC42 small effector protein 1-A (cdc42se1-a) of Xenopus laevis (African clawed frog).